A 344-amino-acid chain; its full sequence is Mitochondrial genome maintenance exonuclease 1 (344 aa).

Residues D238, D251, and K253 contribute to the active site. S343 is modified (phosphoserine).

It belongs to the MGME1 family.

The protein resides in the mitochondrion. Its function is as follows. Metal-dependent single-stranded DNA (ssDNA) exonuclease involved in mitochondrial genome maintenance. Has preference for 5'-3' exonuclease activity but is also capable of endonuclease activity on linear substrates. Necessary for maintenance of proper 7S DNA levels. Probably involved in mitochondrial DNA (mtDNA) repair, possibly via the processing of displaced DNA containing Okazaki fragments during RNA-primed DNA synthesis on the lagging strand or via processing of DNA flaps during long-patch base excision repair. Specifically binds 5-hydroxymethylcytosine (5hmC)-containing DNA in stem cells. The polypeptide is Mitochondrial genome maintenance exonuclease 1 (Homo sapiens (Human)).